The primary structure comprises 1909 residues: DENN domain-containing protein 4C (1909 aa).

The region spanning 40–199 (KAPITDIAII…SVFLCYKKSV (160 aa)) is the MABP domain. A uDENN domain is found at 191-364 (VFLCYKKSVP…NIPFPSPQRP (174 aa)). The 137-residue stretch at 385-521 (PLPLSGANFS…PCKNLLSTLK (137 aa)) folds into the cDENN domain. Residues 523 to 641 (LYPQLSSVHQ…CSFVSDKDTG (119 aa)) form the dDENN domain. 3 positions are modified to phosphoserine: Ser703, Ser737, and Ser741. One copy of the PPR repeat lies at 821 to 855 (VCYRVVMQLCGLWGHPVLAVRVLFEMKTARIKPNA). Residues Glu953, Ser965, Ser968, and Ser973 each carry the phosphoserine modification. Thr975 carries the phosphothreonine modification. A phosphoserine mark is found at Ser989, Ser996, Ser1003, Ser1046, Ser1061, Ser1099, Ser1126, Ser1184, Ser1225, Ser1244, Ser1252, and Ser1278. Disordered regions lie at residues 1243–1263 (KSPL…NRES) and 1277–1338 (SSLP…HGSL). The span at 1296–1316 (SSPAVSRSKTFTGRFKQQTPS) shows a compositional bias: polar residues. Phosphoserine occurs at positions 1325, 1337, and 1346. Positions 1419-1474 (SGLVPSELTQSNTSLGSSSSSGDVGKLHYPTGEVPFPRGMKGQDFEKSDHGSSQNT) are disordered. The segment covering 1426–1440 (LTQSNTSLGSSSSSG) has biased composition (low complexity). Residues 1459-1468 (KGQDFEKSDH) are compositionally biased toward basic and acidic residues. Ser1623, Ser1627, Ser1629, Ser1640, and Ser1799 each carry phosphoserine.

Phosphorylated in response to insulin.

The protein resides in the cytoplasmic vesicle membrane. Its subcellular location is the cell membrane. It localises to the cytoplasm. It is found in the cytosol. In terms of biological role, guanine nucleotide exchange factor (GEF) activating RAB10. Promotes the exchange of GDP to GTP, converting inactive GDP-bound RAB10 into its active GTP-bound form. Thereby, stimulates SLC2A4/GLUT4 glucose transporter-enriched vesicles delivery to the plasma membrane in response to insulin. The protein is DENN domain-containing protein 4C (DENND4C) of Homo sapiens (Human).